A 528-amino-acid chain; its full sequence is PC4 and SFRS1-interacting protein (528 aa).

One can recognise a PWWP domain in the interval P7–N64. A disordered region spans residues Y61–S348. Residue K75 forms a Glycyl lysine isopeptide (Lys-Gly) (interchain with G-Cter in SUMO2) linkage. Residues F92–S106 show a composition bias toward polar residues. A phosphoserine mark is found at S102, S105, and S106. Residues K113–K135 are compositionally biased toward basic and acidic residues. Phosphothreonine occurs at positions 115 and 122. S129 is modified (phosphoserine). A Phosphothreonine modification is found at T141. Residues A144–A153 are compositionally biased toward basic residues. The Nuclear localization signal signature appears at R146–Q156. S176 and S205 each carry phosphoserine. Residues D212 to R260 show a composition bias toward basic and acidic residues. Residue S270 is modified to Phosphoserine. T271 is subject to Phosphothreonine. Phosphoserine is present on residues S272 and S274. The span at K285–M300 shows a compositional bias: basic residues. Residues G303–S348 are compositionally biased toward basic and acidic residues. 2 coiled-coil regions span residues E306 to K332 and N369 to E393. An integrase-binding domain (IBD) region spans residues V338–T415. S432 is subject to Phosphoserine. Position 435 is a phosphothreonine (T435). S441 is modified (phosphoserine). A compositionally biased stretch (basic and acidic residues) spans E444–T471. A disordered region spans residues E444–N528. The span at G472–G492 shows a compositional bias: polar residues. Residues E496 to N528 show a composition bias toward basic and acidic residues. At R515 the chain carries Citrulline. Position 520 is a phosphoserine (S520). The residue at position 525 (T525) is a Phosphothreonine.

The protein belongs to the HDGF family. Monomer. Interacts with IFRD1/PC4. Interacts (via IBD domain) with POGZ (via IBM motif) and CDCA7L (via IBM motifs). Interacts (via IBD domain) with KMT2A (via IBM motifs) with a moderate affinity whereas interacts with the KMT2A-MEN1 complex with a greater affinity; MEN1 enhances interaction of KMT2A with PSIP1. Interacts (via IBD domain) with IWS1 (via IBM motif), MED1 (via IBM motif) and DBF4 (via IBM motifs). Post-translationally, citrullinated by PADI4.

Its subcellular location is the nucleus. In terms of biological role, transcriptional coactivator involved in neuroepithelial stem cell differentiation and neurogenesis. Involved in particular in lens epithelial cell gene regulation and stress responses. May play an important role in lens epithelial to fiber cell terminal differentiation. May play a protective role during stress-induced apoptosis. This chain is PC4 and SFRS1-interacting protein (Psip1), found in Mus musculus (Mouse).